An 813-amino-acid chain; its full sequence is Tax1-binding protein 1 homolog (813 aa).

3 positions are modified to phosphoserine: serine 124, serine 138, and serine 225. Residues 144 to 627 (TTKAGLLELK…LENQAERKME (484 aa)) adopt a coiled-coil conformation. The oligomerization stretch occupies residues 320-420 (EEIGRLQLCL…ELKLNAMKKD (101 aa)). A compositionally biased stretch (polar residues) spans 489–502 (DASVNTDPATSAST). Residues 489–508 (DASVNTDPATSASTVDVKPS) form a disordered region. A phosphoserine mark is found at serine 617, serine 633, and serine 690. Residues 663 to 738 (YASQETRDGA…DPPSQHLRGH (76 aa)) are disordered. 2 consecutive UBZ1-type zinc fingers follow at residues 751 to 777 (HKKC…VESH) and 778 to 804 (WKVC…VQTH). Positions 754, 757, 773, 777, 781, 784, 800, and 804 each coordinate Zn(2+).

In terms of assembly, homooligomer. Interacts with TNFAIP3. Interacts with STARD13. Interacts with MYO6. Interacts with TOM1; the interaction is indirect and is mediated by MYO6, which acts as a bridge between TOM1 and TAX1BP1. Interacts with MAVS; this interaction induces MAVS polyubiquitination. Interacts with TNIP1. Interacts with TRAF6; this interaction mediates deubiquitination of TRAF6 and inhibition of NF-kappa-B activation. Interacts with RIPK1; this interaction negatively regulates RIPK1 ubiquitination. Interacts with NBR1. Interacts with TBK1. Interacts with RB1CC1. Interacts with SQSTM1. Interacts with AZI2.

It localises to the cytoplasm. The protein resides in the mitochondrion. Its subcellular location is the preautophagosomal structure. The protein localises to the cytoplasmic vesicle. It is found in the autophagosome. In terms of biological role, ubiquitin-binding adapter that participates in inflammatory, antiviral and innate immune processes as well as selective autophagy regulation. Plays a key role in the negative regulation of NF-kappa-B and IRF3 signalings by acting as an adapter for the ubiquitin-editing enzyme A20/TNFAIP3 to bind and inactivate its substrates. Disrupts the interactions between the E3 ubiquitin ligase TRAF3 and TBK1/IKBKE to attenuate 'Lys63'-linked polyubiquitination of TBK1 and thereby IFN-beta production. Also recruits A20/TNFAIP3 to ubiquitinated signaling proteins TRAF6 and RIPK1, leading to their deubiquitination and disruption of IL-1 and TNF-induced NF-kappa-B signaling pathways. Inhibits virus-induced apoptosis by inducing the 'Lys-48'-linked polyubiquitination and degradation of MAVS via recruitment of the E3 ligase ITCH, thereby attenuating MAVS-mediated apoptosis signaling. As a macroautophagy/autophagy receptor, facilitates the xenophagic clearance of pathogenic bacteria such as Salmonella typhimurium and Mycobacterium tuberculosis. Upon NBR1 recruitment to the SQSTM1-ubiquitin condensates, acts as the major recruiter of RB1CC1 to these ubiquitin condensates to promote their autophagic degradation. The chain is Tax1-binding protein 1 homolog (TAX1BP1) from Pongo abelii (Sumatran orangutan).